Here is a 71-residue protein sequence, read N- to C-terminus: Large ribosomal subunit protein bL31 (71 aa).

The Zn(2+) site is built by cysteine 16, cysteine 18, cysteine 37, and cysteine 40.

This sequence belongs to the bacterial ribosomal protein bL31 family. Type A subfamily. In terms of assembly, part of the 50S ribosomal subunit. It depends on Zn(2+) as a cofactor.

Binds the 23S rRNA. The chain is Large ribosomal subunit protein bL31 from Pseudomonas entomophila (strain L48).